The following is a 157-amino-acid chain: RxLR effector protein PITG_04049 (157 aa).

A signal peptide spans 1–23 (MRLIAGVLAGFLVICEVTSTSES). The RxLR-dEER signature appears at 51–65 (QFLRTDVVMNRGEER).

Belongs to the RxLR effector family.

It localises to the secreted. The protein localises to the host cytoplasm. It is found in the host nucleus. Its function is as follows. Effector that might be involved in host plant infection. The sequence is that of RxLR effector protein PITG_04049 from Phytophthora infestans (strain T30-4) (Potato late blight agent).